We begin with the raw amino-acid sequence, 177 residues long: MKLPKEGDFITIQSYKHDGSLHRTWRDTMVLKTTENAIIGVNDHTLVTESDGRRWVTREPAIVYFHKKYWFNIIAMIRDNGTSYYCNMASPYYLDEEALKYIDYDLDVKIFTDGEKRLLDVEEYERHKRKMNYSDDLDYILKEHVKILVDWINNGRGPFSEAYVNIWYKRYVELKNR.

Catalysis depends on R23, which acts as the Proton donor. Mg(2+) contacts are provided by N87, D103, D105, D107, D120, and E123.

The protein belongs to the Ntdp family. It depends on Mg(2+) as a cofactor.

It catalyses the reaction a ribonucleoside 5'-triphosphate + H2O = a ribonucleoside 5'-diphosphate + phosphate + H(+). The catalysed reaction is a ribonucleoside 5'-diphosphate + H2O = a ribonucleoside 5'-phosphate + phosphate + H(+). In terms of biological role, has nucleoside phosphatase activity towards nucleoside triphosphates and nucleoside diphosphates. In Streptococcus pneumoniae serotype 2 (strain D39 / NCTC 7466), this protein is Nucleoside triphosphate/diphosphate phosphatase.